The chain runs to 503 residues: Aspartyl/glutamyl-tRNA(Asn/Gln) amidotransferase subunit B (503 aa).

It belongs to the GatB/GatE family. GatB subfamily. As to quaternary structure, heterotrimer of A, B and C subunits.

The enzyme catalyses L-glutamyl-tRNA(Gln) + L-glutamine + ATP + H2O = L-glutaminyl-tRNA(Gln) + L-glutamate + ADP + phosphate + H(+). The catalysed reaction is L-aspartyl-tRNA(Asn) + L-glutamine + ATP + H2O = L-asparaginyl-tRNA(Asn) + L-glutamate + ADP + phosphate + 2 H(+). Allows the formation of correctly charged Asn-tRNA(Asn) or Gln-tRNA(Gln) through the transamidation of misacylated Asp-tRNA(Asn) or Glu-tRNA(Gln) in organisms which lack either or both of asparaginyl-tRNA or glutaminyl-tRNA synthetases. The reaction takes place in the presence of glutamine and ATP through an activated phospho-Asp-tRNA(Asn) or phospho-Glu-tRNA(Gln). This Jannaschia sp. (strain CCS1) protein is Aspartyl/glutamyl-tRNA(Asn/Gln) amidotransferase subunit B.